Here is a 399-residue protein sequence, read N- to C-terminus: Phosphoglycerate kinase (399 aa).

Substrate-binding positions include 24–26, arginine 39, 62–65, arginine 121, and arginine 154; these read DYN and HLGR. Residues lysine 204, glycine 295, glutamate 326, and 355–358 contribute to the ATP site; that span reads GGDS.

The protein belongs to the phosphoglycerate kinase family. As to quaternary structure, monomer.

It localises to the cytoplasm. The enzyme catalyses (2R)-3-phosphoglycerate + ATP = (2R)-3-phospho-glyceroyl phosphate + ADP. It participates in carbohydrate degradation; glycolysis; pyruvate from D-glyceraldehyde 3-phosphate: step 2/5. The protein is Phosphoglycerate kinase of Elusimicrobium minutum (strain Pei191).